Here is a 220-residue protein sequence, read N- to C-terminus: Fructose-6-phosphate aldolase (220 aa).

K85 serves as the catalytic Schiff-base intermediate with substrate.

The protein belongs to the transaldolase family. Type 3A subfamily. As to quaternary structure, homodecamer.

The protein localises to the cytoplasm. It catalyses the reaction beta-D-fructose 6-phosphate = dihydroxyacetone + D-glyceraldehyde 3-phosphate. In terms of biological role, catalyzes the reversible formation of fructose 6-phosphate from dihydroxyacetone and D-glyceraldehyde 3-phosphate via an aldolization reaction. The sequence is that of Fructose-6-phosphate aldolase from Salmonella heidelberg (strain SL476).